The following is a 263-amino-acid chain: Probable 6-oxopurine nucleoside phosphorylase (263 aa).

Residues Thr-9, 49 to 50 (RH), and 82 to 83 (TA) contribute to the phosphate site. Residue Met-181 participates in substrate binding. Thr-182 contributes to the phosphate binding site. 205-207 (NYA) contacts substrate.

The protein belongs to the PNP/MTAP phosphorylase family. MTAP subfamily. In terms of assembly, homohexamer. Dimer of a homotrimer.

It catalyses the reaction a purine D-ribonucleoside + phosphate = a purine nucleobase + alpha-D-ribose 1-phosphate. It participates in purine metabolism; purine nucleoside salvage. Its function is as follows. Purine nucleoside phosphorylase which is highly specific for 6-oxopurine nucleosides. Cleaves guanosine or inosine to respective bases and sugar-1-phosphate molecules. Involved in purine salvage. This chain is Probable 6-oxopurine nucleoside phosphorylase, found in Dictyoglomus turgidum (strain DSM 6724 / Z-1310).